The chain runs to 603 residues: Podocalyxin-like protein 2 (603 aa).

An N-terminal signal peptide occupies residues 1–28 (MARPLRAARLPPPLLLLLAAGASLGAYA). Residues 29–499 (VGVDEPGPEG…ATQVRSDYGT (471 aa)) lie on the Extracellular side of the membrane. Residues 53–92 (FEPLDSEEPSEAMGLDAGLAPGSGFPSEDSEESRLLQPPQ) form a disordered region. Ser75 is a glycosylation site (O-linked (Xyl...) (chondroitin sulfate) serine). The residue at position 93 (Tyr93) is a Sulfotyrosine. Residue Asn101 is glycosylated (N-linked (GlcNAc...) asparagine). The residue at position 113 (Tyr113) is a Sulfotyrosine. A disordered region spans residues 124–368 (SMEDPGQAPD…LEGQAAEAHS (245 aa)). Acidic residues predominate over residues 156–187 (QEEEEEEEEEEEEREEEEREKEAEEEEEEEEL). Over residues 196 to 216 (ATAQAHAPSPSTSSSTSSQSP) the composition is skewed to low complexity. 3 stretches are compositionally biased toward polar residues: residues 240–266 (VKPT…QESG), 302–314 (ALPS…TVPP), and 339–349 (DTESTPSSATW). Asn260 carries N-linked (GlcNAc...) asparagine glycosylation. Asn394 carries N-linked (GlcNAc...) asparagine glycosylation. The helical transmembrane segment at 500 to 520 (LFVVLVIIGVICFIIIVLGLL) threads the bilayer. Topologically, residues 521 to 603 (YNCWQRRMPK…SDVFEEDTHL (83 aa)) are cytoplasmic. Residues 558 to 570 (DSQSEMQEKQPSL) show a composition bias toward polar residues. Positions 558-603 (DSQSEMQEKQPSLNGGAINGPSSWSALMGSKRDPEDSDVFEEDTHL) are disordered. 2 positions are modified to phosphoserine: Ser569 and Ser594. Over residues 592–603 (EDSDVFEEDTHL) the composition is skewed to acidic residues.

Belongs to the podocalyxin family. Homodimer; disulfide-linked. Interacts with SELL, SELE and SELP. In terms of processing, glycosylated; contains chondroitin sulfate. Displays sialylated O-linked oligosaccharides. Post-translationally, sulfation is necessary for interaction with SELL. Sialylated O-linked oligosaccharides are necessary for interaction with SELL, SELE and SELP.

It is found in the membrane. In terms of biological role, acts as a ligand for vascular selectins. Mediates rapid rolling of leukocytes over vascular surfaces through high affinity divalent cation-dependent interactions with E-, P- and L-selectins. The protein is Podocalyxin-like protein 2 (Podxl2) of Mus musculus (Mouse).